The chain runs to 184 residues: Photosystem I assembly protein Ycf4 (184 aa).

2 consecutive transmembrane segments (helical) span residues 22 to 42 and 57 to 77; these read FCWAFILFLGSLGFLLVGTSS and IIFFPQGIVMSFYGIAGLFIS.

The protein belongs to the Ycf4 family.

The protein localises to the plastid. The protein resides in the chloroplast thylakoid membrane. Seems to be required for the assembly of the photosystem I complex. In Draba nemorosa (Woodland whitlowgrass), this protein is Photosystem I assembly protein Ycf4.